The chain runs to 526 residues: AAA ATPase forming ring-shaped complexes (526 aa).

Residues 1–18 (MGDMASSTDPAAHNSFSD) are compositionally biased toward polar residues. Residues 1–20 (MGDMASSTDPAAHNSFSDFN) are disordered. Residues 20–59 (NREEMTRLADNVRSLQRTNQDLSARNTKLAEMLKSSRDKL) are a coiled coil. Residue 257–262 (GCGKTL) coordinates ATP.

It belongs to the AAA ATPase family. As to quaternary structure, homohexamer. Assembles into a hexameric ring structure.

This chain is AAA ATPase forming ring-shaped complexes, found in Corynebacterium efficiens (strain DSM 44549 / YS-314 / AJ 12310 / JCM 11189 / NBRC 100395).